The sequence spans 631 residues: Dolichyl-diphosphooligosaccharide--protein glycosyltransferase subunit 2 (631 aa).

The first 22 residues, 1-22, serve as a signal peptide directing secretion; the sequence is MAPPGSSTVFLLALTIIASTWA. The Lumenal portion of the chain corresponds to 23 to 540; it reads LTPTHYLTKH…REPEKRPPTV (518 aa). The N-linked (GlcNAc...) asparagine glycan is linked to asparagine 106. Lysine 154 participates in a covalent cross-link: Glycyl lysine isopeptide (Lys-Gly) (interchain with G-Cter in ubiquitin). A helical membrane pass occupies residues 541–561; it reads VSNTFTALILSPLLLLFALWI. The Cytoplasmic portion of the chain corresponds to 562–571; sequence RIGANVSNFT. A helical membrane pass occupies residues 572–592; the sequence is FAPSTIIFHLGHAAMLGLMYV. Residues 593 to 596 are Lumenal-facing; sequence YWTQ. Residues 597–617 traverse the membrane as a helical segment; that stretch reads LNMFQTLKYLAILGSVTFLAG. The Cytoplasmic portion of the chain corresponds to 618-631; sequence NRMLAQQAVKRTAH.

The protein belongs to the SWP1 family. Component of the oligosaccharyltransferase (OST) complex. OST exists in two different complex forms which contain common core subunits RPN1, RPN2, OST48, OST4, DAD1 and TMEM258, either STT3A or STT3B as catalytic subunits, and form-specific accessory subunits. STT3A complex assembly occurs through the formation of 3 subcomplexes. Subcomplex 1 contains RPN1 and TMEM258, subcomplex 2 contains the STT3A-specific subunits STT3A, DC2/OSTC, and KCP2 as well as the core subunit OST4, and subcomplex 3 contains RPN2, DAD1, and OST48. The STT3A complex can form stable complexes with the Sec61 complex or with both the Sec61 and TRAP complexes. Interacts with DDI2. Interacts with TMEM35A/NACHO. As to expression, expressed in all tissues tested.

It localises to the endoplasmic reticulum. The protein resides in the endoplasmic reticulum membrane. Its pathway is protein modification; protein glycosylation. Its function is as follows. Subunit of the oligosaccharyl transferase (OST) complex that catalyzes the initial transfer of a defined glycan (Glc(3)Man(9)GlcNAc(2) in eukaryotes) from the lipid carrier dolichol-pyrophosphate to an asparagine residue within an Asn-X-Ser/Thr consensus motif in nascent polypeptide chains, the first step in protein N-glycosylation. N-glycosylation occurs cotranslationally and the complex associates with the Sec61 complex at the channel-forming translocon complex that mediates protein translocation across the endoplasmic reticulum (ER). All subunits are required for a maximal enzyme activity. The sequence is that of Dolichyl-diphosphooligosaccharide--protein glycosyltransferase subunit 2 from Homo sapiens (Human).